A 185-amino-acid polypeptide reads, in one-letter code: Protein GrpE (185 aa).

A disordered region spans residues 1-44; it reads MSEEELTNGPGPEPQPEPLEVESAPLEAAPAGEPDKALLEAQQQ.

This sequence belongs to the GrpE family. Homodimer.

It localises to the cytoplasm. Its function is as follows. Participates actively in the response to hyperosmotic and heat shock by preventing the aggregation of stress-denatured proteins, in association with DnaK and GrpE. It is the nucleotide exchange factor for DnaK and may function as a thermosensor. Unfolded proteins bind initially to DnaJ; upon interaction with the DnaJ-bound protein, DnaK hydrolyzes its bound ATP, resulting in the formation of a stable complex. GrpE releases ADP from DnaK; ATP binding to DnaK triggers the release of the substrate protein, thus completing the reaction cycle. Several rounds of ATP-dependent interactions between DnaJ, DnaK and GrpE are required for fully efficient folding. The sequence is that of Protein GrpE from Methylococcus capsulatus (strain ATCC 33009 / NCIMB 11132 / Bath).